A 264-amino-acid chain; its full sequence is Elongation factor Ts (264 aa).

Positions 76–79 (TDFV) are involved in Mg(2+) ion dislocation from EF-Tu.

It belongs to the EF-Ts family.

It localises to the cytoplasm. Its function is as follows. Associates with the EF-Tu.GDP complex and induces the exchange of GDP to GTP. It remains bound to the aminoacyl-tRNA.EF-Tu.GTP complex up to the GTP hydrolysis stage on the ribosome. This is Elongation factor Ts from Deinococcus deserti (strain DSM 17065 / CIP 109153 / LMG 22923 / VCD115).